The chain runs to 227 residues: MRTWAVLPILLMLVGCVTQRIVEPQPHSAPIAARQVQPEQPQAPGSLWTEGRGSLFRDNKARRVGDIVTVAIYEQASASKQASTATGRSSSMSAGLTNLFGIEGNIGNLNKFIDPTSLIDTSYENAFDGSGSTSRKEDLVATLTAQVIEELPNGNLCIAGGKTVTVNREDQIILLEGIIRPEDISARNVVSSKHILDAKIAYTGKGVISDKQRPGWMTRVLDHIWPF.

An N-terminal signal peptide occupies residues 1-15; that stretch reads MRTWAVLPILLMLVG. Residue Cys16 is the site of N-palmitoyl cysteine attachment. Residue Cys16 is the site of S-diacylglycerol cysteine attachment.

This sequence belongs to the FlgH family. The basal body constitutes a major portion of the flagellar organelle and consists of four rings (L,P,S, and M) mounted on a central rod.

It localises to the cell outer membrane. The protein resides in the bacterial flagellum basal body. In terms of biological role, assembles around the rod to form the L-ring and probably protects the motor/basal body from shearing forces during rotation. In Syntrophotalea carbinolica (strain DSM 2380 / NBRC 103641 / GraBd1) (Pelobacter carbinolicus), this protein is Flagellar L-ring protein.